The sequence spans 430 residues: Serine--tRNA ligase (430 aa).

231–233 (TSE) serves as a coordination point for L-serine. 262 to 264 (RSE) provides a ligand contact to ATP. Glu285 provides a ligand contact to L-serine. Residue 349-352 (EISS) coordinates ATP. Residue Ser385 coordinates L-serine.

The protein belongs to the class-II aminoacyl-tRNA synthetase family. Type-1 seryl-tRNA synthetase subfamily. Homodimer. The tRNA molecule binds across the dimer.

It localises to the cytoplasm. The enzyme catalyses tRNA(Ser) + L-serine + ATP = L-seryl-tRNA(Ser) + AMP + diphosphate + H(+). It catalyses the reaction tRNA(Sec) + L-serine + ATP = L-seryl-tRNA(Sec) + AMP + diphosphate + H(+). It participates in aminoacyl-tRNA biosynthesis; selenocysteinyl-tRNA(Sec) biosynthesis; L-seryl-tRNA(Sec) from L-serine and tRNA(Sec): step 1/1. Its function is as follows. Catalyzes the attachment of serine to tRNA(Ser). Is also able to aminoacylate tRNA(Sec) with serine, to form the misacylated tRNA L-seryl-tRNA(Sec), which will be further converted into selenocysteinyl-tRNA(Sec). This is Serine--tRNA ligase from Ruegeria pomeroyi (strain ATCC 700808 / DSM 15171 / DSS-3) (Silicibacter pomeroyi).